Reading from the N-terminus, the 114-residue chain is Nucleoid-associated protein Clos_2855 (114 aa).

This sequence belongs to the YbaB/EbfC family. As to quaternary structure, homodimer.

It is found in the cytoplasm. The protein localises to the nucleoid. Its function is as follows. Binds to DNA and alters its conformation. May be involved in regulation of gene expression, nucleoid organization and DNA protection. The chain is Nucleoid-associated protein Clos_2855 from Alkaliphilus oremlandii (strain OhILAs) (Clostridium oremlandii (strain OhILAs)).